The primary structure comprises 123 residues: Transmembrane protein 80 (123 aa).

The next 4 helical transmembrane spans lie at 2 to 22, 35 to 55, 68 to 88, and 102 to 122; these read LFHLSGLYSALYFLATLLMIV, LALDLVLLLLMGILKVAQLYL, LAASLAFTAVGGLLSVHFLLW, and VLLVLHGLEAGLQVVVIADFI.

It localises to the membrane. The protein localises to the cell projection. Its subcellular location is the cilium. The sequence is that of Transmembrane protein 80 (Tmem80) from Mus musculus (Mouse).